Reading from the N-terminus, the 114-residue chain is Histone H3-3 (114 aa).

A compositionally biased stretch (basic residues) spans 1-17; that stretch reads NTGGKAPRKHIAHKQAK. Positions 1 to 32 are disordered; that stretch reads NTGGKAPRKHIAHKQAKKSSAAAATGGVKKPH. Low complexity predominate over residues 18–28; sequence KSSAAAATGGV.

Belongs to the histone H3 family. As to quaternary structure, the nucleosome is a histone octamer containing two molecules each of H2A, H2B, H3 and H4 assembled in one H3-H4 heterotetramer and two H2A-H2B heterodimers. The octamer wraps approximately 147 bp of DNA.

It is found in the nucleus. The protein localises to the chromosome. Its function is as follows. Core component of nucleosome. Nucleosomes wrap and compact DNA into chromatin, limiting DNA accessibility to the cellular machineries which require DNA as a template. Histones thereby play a central role in transcription regulation, DNA repair, DNA replication and chromosomal stability. DNA accessibility is regulated via a complex set of post-translational modifications of histones, also called histone code, and nucleosome remodeling. This is Histone H3-3 (H3-3) from Stylonychia lemnae (Ciliate).